The primary structure comprises 484 residues: Folate synthesis bifunctional protein (484 aa).

Positions 15–141 (VIALGSNVGN…PFVLAPLVDL (127 aa)) are HPPK. The region spanning 202–470 (TYVMGILNLT…NVRDNVDAAR (269 aa)) is the Pterin-binding domain. The segment at 204–484 (VMGILNLTPD…MMTKRFKNVD (281 aa)) is DHPS. Residue N209 participates in Mg(2+) binding. (7,8-dihydropterin-6-yl)methyl diphosphate-binding positions include T249, D286, N305, D378, K423, and 458–460 (RVH).

In the N-terminal section; belongs to the HPPK family. It in the C-terminal section; belongs to the DHPS family. Mg(2+) is required as a cofactor. Expressed exclusively in reproductive tissues.

It is found in the cytoplasm. Its subcellular location is the cytosol. It catalyses the reaction 6-hydroxymethyl-7,8-dihydropterin + ATP = (7,8-dihydropterin-6-yl)methyl diphosphate + AMP + H(+). The catalysed reaction is (7,8-dihydropterin-6-yl)methyl diphosphate + 4-aminobenzoate = 7,8-dihydropteroate + diphosphate. The protein operates within cofactor biosynthesis; tetrahydrofolate biosynthesis; 2-amino-4-hydroxy-6-hydroxymethyl-7,8-dihydropteridine diphosphate from 7,8-dihydroneopterin triphosphate: step 4/4. Its pathway is cofactor biosynthesis; tetrahydrofolate biosynthesis; 7,8-dihydrofolate from 2-amino-4-hydroxy-6-hydroxymethyl-7,8-dihydropteridine diphosphate and 4-aminobenzoate: step 1/2. Inhibited by sulfanilamide. Catalyzes the first two consecutive steps of tetrahydrofolate biosynthesis. Plays a role in seed stress response and survival. This is Folate synthesis bifunctional protein from Arabidopsis thaliana (Mouse-ear cress).